The chain runs to 131 residues: Inactive protein FON2 SPARE1 (131 aa).

The segment at 67-131 (SPSSLTTTDR…VPTGPNPLHH (65 aa)) is disordered. Residues 76 to 97 (RHHHHHRHHGHHHHRGHDRWNR) show a composition bias toward basic residues.

Belongs to the CLV3/ESR signal peptide family. As to expression, expressed in all aerial apical meristems, including the floral and inflorescence meristems in the reproductive phase and the shoot apical meristem in the vegetative phase. Also detected in the primordia of lateral organs such as the leaf and the floral organs.

Its function is as follows. Non functional suppressor of the fon2 mutation. In Oryza sativa subsp. japonica, the protein has a single amino acid substitution at the putative processing site of the signal peptide while in all the other varieties/species of domesticated and wild rice tested the protein is functional. This chain is Inactive protein FON2 SPARE1 (FOS1), found in Oryza sativa subsp. japonica (Rice).